Consider the following 97-residue polypeptide: RxLR effector protein PexRD21 (97 aa).

The signal sequence occupies residues 1 to 21 (MRLSYILVVVIAVTLQACVCA). A RxLR-dEER motif is present at residues 48–66 (RLLRGVKKRTAEREVQEER).

It belongs to the RxLR effector family.

It localises to the secreted. The protein localises to the host cell membrane. Its function is as follows. Effector that is involved in host plant infection. Contributes to virulence during the early infection stage, by inhibiting plant defense responses induced by both PAMP-triggered immunity (PTI) and effector-triggered immunity (ETI). The polypeptide is RxLR effector protein PexRD21 (Phytophthora infestans (strain T30-4) (Potato late blight agent)).